A 471-amino-acid chain; its full sequence is Glutamate--tRNA ligase 1 (471 aa).

Positions 10–20 (PSPTGYLHIGG) match the 'HIGH' region motif. Zn(2+)-binding residues include C99, C101, C126, and D128. The 'KMSKS' region motif lies at 238–242 (RLSKR). An ATP-binding site is contributed by K241.

It belongs to the class-I aminoacyl-tRNA synthetase family. Glutamate--tRNA ligase type 1 subfamily. Monomer. Zn(2+) is required as a cofactor.

The protein resides in the cytoplasm. It catalyses the reaction tRNA(Glu) + L-glutamate + ATP = L-glutamyl-tRNA(Glu) + AMP + diphosphate. Its function is as follows. Catalyzes the attachment of glutamate to tRNA(Glu) in a two-step reaction: glutamate is first activated by ATP to form Glu-AMP and then transferred to the acceptor end of tRNA(Glu). This chain is Glutamate--tRNA ligase 1, found in Alkalilimnicola ehrlichii (strain ATCC BAA-1101 / DSM 17681 / MLHE-1).